Reading from the N-terminus, the 145-residue chain is ATP synthase epsilon chain (145 aa).

It belongs to the ATPase epsilon chain family. F-type ATPases have 2 components, CF(1) - the catalytic core - and CF(0) - the membrane proton channel. CF(1) has five subunits: alpha(3), beta(3), gamma(1), delta(1), epsilon(1). CF(0) has three main subunits: a, b and c.

It localises to the cell membrane. In terms of biological role, produces ATP from ADP in the presence of a proton gradient across the membrane. The protein is ATP synthase epsilon chain of Buchnera aphidicola subsp. Baizongia pistaciae (strain Bp).